We begin with the raw amino-acid sequence, 129 residues long: HTH-type transcriptional regulator GlnR (129 aa).

The region spanning 10–78 is the HTH merR-type domain; the sequence is LFPIGIVMDL…MAGIKQVLLM (69 aa). A DNA-binding region (H-T-H motif) is located at residues 13–32; the sequence is IGIVMDLTQLSARQIRYYEE.

In terms of assembly, homodimer under conditions of nitrogen excess. Monomer under conditions of nitrogen-limited. Interacts with feedback-inhibited GlnA in order to stabilizes GlnR-DNA complex.

Under conditions of nitrogen excess, the DNA binding activity of GlnR is activated by a transient interaction with feedback-inhibited GlnA. Under conditions of nitrogen-limited, GlnR is autoinhibited by its C-terminal region. Functionally, transcription repressor during nitrogen excess. On the contrary of the MerR members, which require longer DNA sites for high-affinity binding, GlnR requires a DNA sequence of 17 nucleotides as minimal binding site. This is HTH-type transcriptional regulator GlnR from Bacillus anthracis.